A 229-amino-acid polypeptide reads, in one-letter code: Leucyl/phenylalanyl-tRNA--protein transferase (229 aa).

It belongs to the L/F-transferase family.

The protein resides in the cytoplasm. It carries out the reaction N-terminal L-lysyl-[protein] + L-leucyl-tRNA(Leu) = N-terminal L-leucyl-L-lysyl-[protein] + tRNA(Leu) + H(+). The catalysed reaction is N-terminal L-arginyl-[protein] + L-leucyl-tRNA(Leu) = N-terminal L-leucyl-L-arginyl-[protein] + tRNA(Leu) + H(+). It catalyses the reaction L-phenylalanyl-tRNA(Phe) + an N-terminal L-alpha-aminoacyl-[protein] = an N-terminal L-phenylalanyl-L-alpha-aminoacyl-[protein] + tRNA(Phe). In terms of biological role, functions in the N-end rule pathway of protein degradation where it conjugates Leu, Phe and, less efficiently, Met from aminoacyl-tRNAs to the N-termini of proteins containing an N-terminal arginine or lysine. The protein is Leucyl/phenylalanyl-tRNA--protein transferase of Pseudomonas syringae pv. tomato (strain ATCC BAA-871 / DC3000).